Reading from the N-terminus, the 1028-residue chain is Unconventional myosin-Ic (1028 aa).

Residue Met-1 is modified to N-acetylmethionine. Residues 12–696 form the Myosin motor domain; it reads GVQDFVLLEN…TLFATEDALE (685 aa). ATP is bound by residues Asn-53, Tyr-61, 104-113, and 157-161; these read SGESGAGKTE and NDNSS. The residue at position 348 (Lys-348) is an N6-methyllysine. Residues 573 to 595 form an actin-binding region; that stretch reads LSKLMEILMSKEPSYIRCIKPND. IQ domains lie at 699–728 and 722–751; these read KQSLATKMQATWRGFYRRKKFLHMKHSAIA and MKHSAIAIQSWWRGTLGRRKAAKRKWAVQT. In terms of domain architecture, TH1 spans 850-1024; it reads KDNYPQSVPR…NGHLTVVAPR (175 aa).

This sequence belongs to the TRAFAC class myosin-kinesin ATPase superfamily. Myosin family. In terms of assembly, interacts (via its IQ motifs) with CALM.

It is found in the cytoplasm. Its subcellular location is the cell cortex. The protein resides in the cell projection. The protein localises to the ruffle membrane. It localises to the cytoplasmic vesicle. It is found in the stereocilium membrane. Its function is as follows. Myosins are actin-based motor molecules with ATPase activity. Unconventional myosins serve in intracellular movements. Their highly divergent tails are presumed to bind to membranous compartments, which would be moved relative to actin filaments. This chain is Unconventional myosin-Ic (MYO1C), found in Gallus gallus (Chicken).